A 611-amino-acid polypeptide reads, in one-letter code: Leucine aminopeptidase (611 aa).

Substrate contacts are provided by residues 129-131 (QCQ) and 278-282 (GGMEN). Position 305 (histidine 305) interacts with Zn(2+). The active-site Proton acceptor is the glutamate 306. Histidine 309 and glutamate 328 together coordinate Zn(2+). Residue tyrosine 393 is the Proton donor of the active site. 562 to 564 (RMK) is a binding site for substrate.

This sequence belongs to the peptidase M1 family. Zn(2+) serves as cofactor.

It localises to the cytoplasm. It catalyses the reaction an epoxide + H2O = an ethanediol. Aminopeptidase that preferentially cleaves di- and tripeptides. Also has low epoxide hydrolase activity (in vitro). Can hydrolyze the epoxide leukotriene LTA(4) but it forms preferentially 5,6-dihydroxy-7,9,11,14-eicosatetraenoic acid rather than the cytokine leukotriene B(4) as the product compared to the homologous mammalian enzyme (in vitro). The chain is Leucine aminopeptidase (LKHA4) from Oryza sativa subsp. japonica (Rice).